Here is a 145-residue protein sequence, read N- to C-terminus: Basic phospholipase A2 S11-61 (145 aa).

Residues 1–19 (MYPVHLLVLLAVCVSLLGA) form the signal peptide. The propeptide occupies 20–27 (SNIPPQPL). Intrachain disulfides connect Cys-38-Cys-98, Cys-54-Cys-144, Cys-56-Cys-72, Cys-71-Cys-125, Cys-78-Cys-118, Cys-87-Cys-111, and Cys-105-Cys-116. Ca(2+) is bound by residues Tyr-55, Gly-57, and Gly-59. His-75 is an active-site residue. Ca(2+) is bound at residue Asp-76. Residue Asp-119 is part of the active site.

The protein belongs to the phospholipase A2 family. Group I subfamily. D49 sub-subfamily. Ca(2+) serves as cofactor. In terms of tissue distribution, expressed by the venom gland.

Its subcellular location is the secreted. The enzyme catalyses a 1,2-diacyl-sn-glycero-3-phosphocholine + H2O = a 1-acyl-sn-glycero-3-phosphocholine + a fatty acid + H(+). Its function is as follows. Snake venom phospholipase A2 (PLA2) that inhibits collagen-induced platelet aggregation. PLA2 catalyzes the calcium-dependent hydrolysis of the 2-acyl groups in 3-sn-phosphoglycerides. The protein is Basic phospholipase A2 S11-61 of Austrelaps superbus (Lowland copperhead snake).